Consider the following 309-residue polypeptide: Tagatose-6-phosphate kinase (309 aa).

This sequence belongs to the carbohydrate kinase PfkB family. LacC subfamily.

It catalyses the reaction D-tagatofuranose 6-phosphate + ATP = D-tagatofuranose 1,6-bisphosphate + ADP + H(+). The protein operates within carbohydrate metabolism; D-tagatose 6-phosphate degradation; D-glyceraldehyde 3-phosphate and glycerone phosphate from D-tagatose 6-phosphate: step 1/2. The protein is Tagatose-6-phosphate kinase of Streptococcus pneumoniae serotype 4 (strain ATCC BAA-334 / TIGR4).